Here is a 483-residue protein sequence, read N- to C-terminus: Spore germination protein B1 (483 aa).

5 consecutive transmembrane segments (helical) span residues 289–309, 323–343, 353–373, 375–395, and 410–430; these read ILIT…HTGL, LNVP…IELI, PIGQ…AVQA, IVSA…FTVP, and VMIS…LFVI.

This sequence belongs to the GerABKA family.

The protein resides in the cell membrane. Involved in the response to the germinative mixture of L-asparagine, glucose, fructose and potassium ions (AGFK). Cannot stimulate germination in the absence of gerD and gerK gene products (fructose and glucose receptors respectively). In Bacillus subtilis (strain 168), this protein is Spore germination protein B1 (gerBA).